The primary structure comprises 296 residues: SPbeta prophage-derived endonuclease YokF (296 aa).

The first 19 residues, 1–19, serve as a signal peptide directing secretion; it reads MKKVLLGFAAFTLSLSLAA. Cys-20 is lipidated: N-palmitoyl cysteine. Cys-20 carries S-diacylglycerol cysteine lipidation. Residues 20–65 form a disordered region; that stretch reads CSSNDSEKVSTEKETPQASTDVEKKTEQKESTKEKTADKSKEKDKK. The segment covering 24–65 has biased composition (basic and acidic residues); the sequence is DSEKVSTEKETPQASTDVEKKTEQKESTKEKTADKSKEKDKK. Residues 66–199 enclose the TNase-like domain; the sequence is ELVDVTLDRA…KSEKLSIWSK (134 aa). A Ca(2+)-binding site is contributed by Asp-79. Arg-93 is an active-site residue. Residues Asp-98 and Thr-99 each coordinate Ca(2+). Active-site residues include Glu-101 and Arg-144. Residues 218–296 are disordered; the sequence is AVKKATTSKP…RDHDNYACER (79 aa). Over residues 219-244 the composition is skewed to low complexity; sequence VKKATTSKPAATQPTTPKASSETSTT. The span at 284 to 296 shows a compositional bias: basic and acidic residues; the sequence is KMDRDHDNYACER.

The cofactor is Ca(2+). Cu(2+) is required as a cofactor. Mn(2+) serves as cofactor.

Its subcellular location is the cell membrane. Inhibited by aurintricalboxylic acid but not by Zn(2+), Mn(2+), Hg(2+), 2-mercaptoethanol and sodium citrate. Neither inhibited nor activated by ATP. Its function is as follows. Catalyzes the hydrolysis of supercoiled double and single strand DNA and RNA. Involved in chromosomal DNA degradation and cell death caused by thermal stress. This is SPbeta prophage-derived endonuclease YokF (yokF) from Bacillus subtilis (strain 168).